Reading from the N-terminus, the 296-residue chain is Glycine--tRNA ligase alpha subunit (296 aa).

This sequence belongs to the class-II aminoacyl-tRNA synthetase family. In terms of assembly, tetramer of two alpha and two beta subunits.

The protein localises to the cytoplasm. It catalyses the reaction tRNA(Gly) + glycine + ATP = glycyl-tRNA(Gly) + AMP + diphosphate. This is Glycine--tRNA ligase alpha subunit from Prochlorococcus marinus (strain SARG / CCMP1375 / SS120).